An 865-amino-acid polypeptide reads, in one-letter code: Alanine--tRNA ligase (865 aa).

4 residues coordinate Zn(2+): His556, His560, Cys660, and His664.

The protein belongs to the class-II aminoacyl-tRNA synthetase family. Requires Zn(2+) as cofactor.

The protein localises to the cytoplasm. The catalysed reaction is tRNA(Ala) + L-alanine + ATP = L-alanyl-tRNA(Ala) + AMP + diphosphate. Its function is as follows. Catalyzes the attachment of alanine to tRNA(Ala) in a two-step reaction: alanine is first activated by ATP to form Ala-AMP and then transferred to the acceptor end of tRNA(Ala). Also edits incorrectly charged Ser-tRNA(Ala) and Gly-tRNA(Ala) via its editing domain. The protein is Alanine--tRNA ligase of Vesicomyosocius okutanii subsp. Calyptogena okutanii (strain HA).